The sequence spans 479 residues: Glutamyl-tRNA reductase (479 aa).

Substrate-binding positions include 48 to 51, serine 104, 109 to 111, and glutamine 115; these read TCNR and ERQ. Cysteine 49 serves as the catalytic Nucleophile. Residue 189–194 participates in NADP(+) binding; sequence GAGKMG. The segment at 417 to 455 is disordered; the sequence is DAGRSLAEAPDADTPDLGEAPSRCPYMTHDPGGDGTETE.

This sequence belongs to the glutamyl-tRNA reductase family. In terms of assembly, homodimer.

It carries out the reaction (S)-4-amino-5-oxopentanoate + tRNA(Glu) + NADP(+) = L-glutamyl-tRNA(Glu) + NADPH + H(+). Its pathway is porphyrin-containing compound metabolism; protoporphyrin-IX biosynthesis; 5-aminolevulinate from L-glutamyl-tRNA(Glu): step 1/2. Its function is as follows. Catalyzes the NADPH-dependent reduction of glutamyl-tRNA(Glu) to glutamate 1-semialdehyde (GSA). The polypeptide is Glutamyl-tRNA reductase (Salinibacter ruber (strain DSM 13855 / M31)).